The following is a 228-amino-acid chain: L-ribulose-5-phosphate 4-epimerase UlaF (228 aa).

Residues 26-27, 43-44, and 72-73 contribute to the substrate site; these read GN, SG, and SS. Zn(2+) contacts are provided by Asp-74, His-93, and His-95. Asp-118 serves as the catalytic Proton donor/acceptor. His-167 contributes to the Zn(2+) binding site. The active-site Proton donor/acceptor is the Tyr-225.

It belongs to the aldolase class II family. AraD/FucA subfamily. Zn(2+) is required as a cofactor.

It carries out the reaction L-ribulose 5-phosphate = D-xylulose 5-phosphate. It participates in cofactor degradation; L-ascorbate degradation; D-xylulose 5-phosphate from L-ascorbate: step 4/4. Catalyzes the isomerization of L-ribulose 5-phosphate to D-xylulose 5-phosphate. Is involved in the anaerobic L-ascorbate utilization. The protein is L-ribulose-5-phosphate 4-epimerase UlaF of Salmonella choleraesuis (strain SC-B67).